Consider the following 185-residue polypeptide: MISVNDFKTGLTISVDNGIWKVIDFQHVKPGKGSAFVRSKLRNLRTGAIQEKTFRAGEKVEPAMIENRRMQYLYDDGDMHVFMDNQTFEQTELPGDYLENELKFLKANMEVQIQTYEGETIGVELPKTVELTVTETEPGIKGDTATGATKSATVETGYTLNVPLFVNEGDVLVINTGDGSYVSRA.

It belongs to the elongation factor P family.

The protein localises to the cytoplasm. It functions in the pathway protein biosynthesis; polypeptide chain elongation. Its function is as follows. Involved in peptide bond synthesis. Stimulates efficient translation and peptide-bond synthesis on native or reconstituted 70S ribosomes in vitro. Probably functions indirectly by altering the affinity of the ribosome for aminoacyl-tRNA, thus increasing their reactivity as acceptors for peptidyl transferase. This chain is Elongation factor P, found in Staphylococcus carnosus (strain TM300).